Consider the following 475-residue polypeptide: ATP synthase subunit beta (475 aa).

161-168 (GGAGVGKT) contributes to the ATP binding site.

The protein belongs to the ATPase alpha/beta chains family. F-type ATPases have 2 components, CF(1) - the catalytic core - and CF(0) - the membrane proton channel. CF(1) has five subunits: alpha(3), beta(3), gamma(1), delta(1), epsilon(1). CF(0) has three main subunits: a(1), b(2) and c(9-12). The alpha and beta chains form an alternating ring which encloses part of the gamma chain. CF(1) is attached to CF(0) by a central stalk formed by the gamma and epsilon chains, while a peripheral stalk is formed by the delta and b chains.

It is found in the cell membrane. It carries out the reaction ATP + H2O + 4 H(+)(in) = ADP + phosphate + 5 H(+)(out). In terms of biological role, produces ATP from ADP in the presence of a proton gradient across the membrane. The catalytic sites are hosted primarily by the beta subunits. This chain is ATP synthase subunit beta, found in Mycoplasma mycoides subsp. mycoides SC (strain CCUG 32753 / NCTC 10114 / PG1).